The chain runs to 579 residues: SLAIN motif-containing protein 1 (579 aa).

6 disordered regions span residues 1–21 (MMAE…GPGP), 60–95 (LLLQ…GPGA), 135–162 (GGGG…PPTL), 233–258 (YTSR…LEDD), 289–313 (STSA…TCSD), and 347–454 (IPHS…PGQI). Residues 9-21 (ASPVAASGAGPGP) show a composition bias toward low complexity. Residues 21 to 56 (PVVNAELEVKKLQELVRKLEKQNEQLRSRAASAAAA) adopt a coiled-coil conformation. The span at 63–73 (QPPPPSAPPPA) shows a compositional bias: pro residues. Positions 141–154 (EPGTAGTPPGEAAT) are enriched in low complexity. Over residues 233-243 (YTSRGSPLSPQ) the composition is skewed to polar residues. A Phosphoserine modification is found at S241. Composition is skewed to low complexity over residues 244–253 (SSIDSELSTS) and 289–305 (STSA…SLSS). A compositionally biased stretch (polar residues) spans 362 to 373 (SPSTQYFPSNNF). The segment covering 374-390 (QQPQYYPPQAQTADQQP) has biased composition (low complexity). Residues 412-432 (AAASSNLSSPVTVRSSQSFDS) are compositionally biased toward polar residues. Asymmetric dimethylarginine is present on R469. Positions 479-516 (SPTVQGSSSSGSSGSSGGSGSGMPLSNGTQLYSTTGIP) are disordered. Residues 502–516 (PLSNGTQLYSTTGIP) are compositionally biased toward polar residues. Residue R554 is modified to Asymmetric dimethylarginine.

The protein belongs to the SLAIN motif-containing family. Interacts with MAPRE1, MAPRE2, MAPRE3 and CKAP5. Interacts with ZDHHC17 (via ANK repeats). As to expression, expressed in embryonic stem cells. Expressed in adult bone marrow, brain, kidney, lung, testis and thymus. Expressed in colon. Isoform 1 is highly expressed in brain. Isoform 2 is more widely expressed in bone marrow, brain, colon, kidney, lung and thymus.

The protein resides in the cytoplasm. The protein localises to the cytoskeleton. In terms of biological role, microtubule plus-end tracking protein that might be involved in the regulation of cytoplasmic microtubule dynamics, microtubule organization and microtubule elongation. The chain is SLAIN motif-containing protein 1 (Slain1) from Mus musculus (Mouse).